The primary structure comprises 545 residues: ATP synthase subunit alpha (545 aa).

173–180 (GDRQTGKT) lines the ATP pocket.

The protein belongs to the ATPase alpha/beta chains family. In terms of assembly, F-type ATPases have 2 components, CF(1) - the catalytic core - and CF(0) - the membrane proton channel. CF(1) has five subunits: alpha(3), beta(3), gamma(1), delta(1), epsilon(1). CF(0) has three main subunits: a(1), b(2) and c(9-12). The alpha and beta chains form an alternating ring which encloses part of the gamma chain. CF(1) is attached to CF(0) by a central stalk formed by the gamma and epsilon chains, while a peripheral stalk is formed by the delta and b chains.

The protein resides in the cell membrane. It catalyses the reaction ATP + H2O + 4 H(+)(in) = ADP + phosphate + 5 H(+)(out). In terms of biological role, produces ATP from ADP in the presence of a proton gradient across the membrane. The alpha chain is a regulatory subunit. This chain is ATP synthase subunit alpha, found in Clavibacter michiganensis subsp. michiganensis (strain NCPPB 382).